A 175-amino-acid chain; its full sequence is Large ribosomal subunit protein bL17 (175 aa).

Positions 127 to 175 are disordered; it reads GEAEAATKRAVKEDALKKDEAPAAESVEDAKPAEDAPAAEAADDKGKDA. Positions 131-147 are enriched in basic and acidic residues; it reads AATKRAVKEDALKKDEA.

The protein belongs to the bacterial ribosomal protein bL17 family. As to quaternary structure, part of the 50S ribosomal subunit. Contacts protein L32.

In Streptomyces griseus subsp. griseus (strain JCM 4626 / CBS 651.72 / NBRC 13350 / KCC S-0626 / ISP 5235), this protein is Large ribosomal subunit protein bL17.